Here is a 1921-residue protein sequence, read N- to C-terminus: Mediator of RNA polymerase II transcription subunit 13 (1921 aa).

Residues lysine 220 and lysine 226 each participate in a glycyl lysine isopeptide (Lys-Gly) (interchain with G-Cter in ubiquitin) cross-link. Disordered stretches follow at residues 400–434, 702–724, and 1485–1528; these read YEKNGYNSSGSSRNSSISSTSSASSGSGWRMTSRT, TQVEGRKGRHDKLPTVISDNSST, and SPTF…GDVS. Residues 407 to 427 are compositionally biased toward low complexity; sequence SSGSSRNSSISSTSSASSGSG. 2 stretches are compositionally biased toward polar residues: residues 1486-1496 and 1515-1527; these read PTFTSLGSESS and EGITSGSSSQGDV.

It belongs to the Mediator complex subunit 13 family. As to quaternary structure, component of the Mediator complex. Interacts with CYCC1-2 (CDK8 homolog). In terms of tissue distribution, ubiquitous. Highest expression in the shoot apex.

The protein localises to the nucleus. Functionally, component of the Mediator complex, a coactivator involved in the regulated transcription of nearly all RNA polymerase II-dependent genes. Mediator functions as a bridge to convey information from gene-specific regulatory proteins to the basal RNA polymerase II transcription machinery. The Mediator complex, having a compact conformation in its free form, is recruited to promoters by direct interactions with regulatory proteins and serves for the assembly of a functional preinitiation complex with RNA polymerase II and the general transcription factors. Acts closely together with MAB12. Involved in the regulation of embryo patterning and cotyledon organogenesis. May act through transient repression of specific genes such as the ones responsive to auxin. This is Mediator of RNA polymerase II transcription subunit 13 (MED13) from Arabidopsis thaliana (Mouse-ear cress).